Reading from the N-terminus, the 657-residue chain is Probable potassium transport system protein Kup 1 (657 aa).

12 helical membrane-spanning segments follow: residues 40–60, 88–108, 135–155, 172–192, 198–218, 241–261, 282–302, 320–340, 380–400, 402–422, 432–452, and 454–474; these read VTSGFWALTLGSIGVVFGDIG, VLSLILWALLIVVTAKYVLLL, WFLLALGVVGASMFIGDSMIT, PALEHYVVPLTVLILVLLFAV, ALVASAFGPVMVVWFTCIAVM, FLLSHGTIGLVTLGAVFLAVT, WMFFVLPSLLINYFGQGALVL, LVLPLVGLATAATVIASQAVI, LLLIGVMLLVLLFHTPSNLAS, YGIAVSTTMVADGIMGFVVIW, AAAVILPFVVVDMSFFSANLL, and LLEGAWVPLLFGAAMAGTIWT.

This sequence belongs to the HAK/KUP transporter (TC 2.A.72) family.

The protein resides in the cell inner membrane. It catalyses the reaction K(+)(in) + H(+)(in) = K(+)(out) + H(+)(out). Transport of potassium into the cell. Likely operates as a K(+):H(+) symporter. The chain is Probable potassium transport system protein Kup 1 from Bradyrhizobium diazoefficiens (strain JCM 10833 / BCRC 13528 / IAM 13628 / NBRC 14792 / USDA 110).